The chain runs to 427 residues: Glutamate-1-semialdehyde 2,1-aminomutase (427 aa).

Position 265 is an N6-(pyridoxal phosphate)lysine (K265).

Belongs to the class-III pyridoxal-phosphate-dependent aminotransferase family. HemL subfamily. Homodimer. It depends on pyridoxal 5'-phosphate as a cofactor.

The protein localises to the cytoplasm. The enzyme catalyses (S)-4-amino-5-oxopentanoate = 5-aminolevulinate. Its pathway is porphyrin-containing compound metabolism; protoporphyrin-IX biosynthesis; 5-aminolevulinate from L-glutamyl-tRNA(Glu): step 2/2. In Bordetella parapertussis (strain 12822 / ATCC BAA-587 / NCTC 13253), this protein is Glutamate-1-semialdehyde 2,1-aminomutase.